We begin with the raw amino-acid sequence, 227 residues long: Ribosomal RNA small subunit methyltransferase G (227 aa).

S-adenosyl-L-methionine contacts are provided by residues Gly74, Leu79, 124-125, and Arg142; that span reads AE.

Belongs to the methyltransferase superfamily. RNA methyltransferase RsmG family.

The protein resides in the cytoplasm. Specifically methylates the N7 position of guanine in position 518 of 16S rRNA. In Mycolicibacterium gilvum (strain PYR-GCK) (Mycobacterium gilvum (strain PYR-GCK)), this protein is Ribosomal RNA small subunit methyltransferase G.